A 360-amino-acid polypeptide reads, in one-letter code: Phospho-N-acetylmuramoyl-pentapeptide-transferase (360 aa).

The next 10 membrane-spanning stretches (helical) occupy residues 27–47, 73–93, 94–114, 132–152, 168–188, 199–219, 236–256, 263–283, 288–308, and 338–358; these read ILSI…LIAW, TMGG…WADL, TNPY…VGFV, WKYF…YAYG, VMPQ…VGTS, GLAI…AWAT, ASEL…FLWF, VFMG…IAVL, FLLV…ILQV, and VIVR…ATLK.

This sequence belongs to the glycosyltransferase 4 family. MraY subfamily. The cofactor is Mg(2+).

It localises to the cell inner membrane. The enzyme catalyses UDP-N-acetyl-alpha-D-muramoyl-L-alanyl-gamma-D-glutamyl-meso-2,6-diaminopimeloyl-D-alanyl-D-alanine + di-trans,octa-cis-undecaprenyl phosphate = di-trans,octa-cis-undecaprenyl diphospho-N-acetyl-alpha-D-muramoyl-L-alanyl-D-glutamyl-meso-2,6-diaminopimeloyl-D-alanyl-D-alanine + UMP. The protein operates within cell wall biogenesis; peptidoglycan biosynthesis. Its function is as follows. Catalyzes the initial step of the lipid cycle reactions in the biosynthesis of the cell wall peptidoglycan: transfers peptidoglycan precursor phospho-MurNAc-pentapeptide from UDP-MurNAc-pentapeptide onto the lipid carrier undecaprenyl phosphate, yielding undecaprenyl-pyrophosphoryl-MurNAc-pentapeptide, known as lipid I. This is Phospho-N-acetylmuramoyl-pentapeptide-transferase from Aliivibrio fischeri (strain MJ11) (Vibrio fischeri).